The chain runs to 347 residues: GMP reductase (347 aa).

108 to 131 is an NADP(+) binding site; it reads ADFEKTKQILDLNPALNFVCIDVA. Positions 181 and 183 each coordinate K(+). Catalysis depends on cysteine 186, which acts as the Thioimidate intermediate. 216-239 contributes to the NADP(+) binding site; the sequence is IISDGGCTTPGDVAKAFGGGADFV.

Belongs to the IMPDH/GMPR family. GuaC type 1 subfamily. In terms of assembly, homotetramer.

It catalyses the reaction IMP + NH4(+) + NADP(+) = GMP + NADPH + 2 H(+). Functionally, catalyzes the irreversible NADPH-dependent deamination of GMP to IMP. It functions in the conversion of nucleobase, nucleoside and nucleotide derivatives of G to A nucleotides, and in maintaining the intracellular balance of A and G nucleotides. The chain is GMP reductase from Escherichia coli O157:H7.